A 190-amino-acid chain; its full sequence is Pyridoxal 5'-phosphate synthase subunit PdxT (190 aa).

L-glutamine is bound at residue 46–48; sequence GES. Cysteine 78 acts as the Nucleophile in catalysis. Residues arginine 108 and 137–138 each bind L-glutamine; that span reads IR. Active-site charge relay system residues include histidine 174 and glutamate 176.

It belongs to the glutaminase PdxT/SNO family. In terms of assembly, in the presence of PdxS, forms a dodecamer of heterodimers. Only shows activity in the heterodimer.

It catalyses the reaction aldehydo-D-ribose 5-phosphate + D-glyceraldehyde 3-phosphate + L-glutamine = pyridoxal 5'-phosphate + L-glutamate + phosphate + 3 H2O + H(+). The catalysed reaction is L-glutamine + H2O = L-glutamate + NH4(+). It functions in the pathway cofactor biosynthesis; pyridoxal 5'-phosphate biosynthesis. Its function is as follows. Catalyzes the hydrolysis of glutamine to glutamate and ammonia as part of the biosynthesis of pyridoxal 5'-phosphate. The resulting ammonia molecule is channeled to the active site of PdxS. The protein is Pyridoxal 5'-phosphate synthase subunit PdxT of Herpetosiphon aurantiacus (strain ATCC 23779 / DSM 785 / 114-95).